The following is a 350-amino-acid chain: Anthranilate phosphoribosyltransferase (350 aa).

5-phospho-alpha-D-ribose 1-diphosphate is bound by residues G94, 97 to 98 (GD), T102, 104 to 107 (NIST), 122 to 130 (KHGNRAVSS), and S134. Residue G94 participates in anthranilate binding. S106 contacts Mg(2+). N125 serves as a coordination point for anthranilate. R180 contacts anthranilate. Residues D239 and E240 each contribute to the Mg(2+) site.

Belongs to the anthranilate phosphoribosyltransferase family. Homodimer. The cofactor is Mg(2+).

It carries out the reaction N-(5-phospho-beta-D-ribosyl)anthranilate + diphosphate = 5-phospho-alpha-D-ribose 1-diphosphate + anthranilate. Its pathway is amino-acid biosynthesis; L-tryptophan biosynthesis; L-tryptophan from chorismate: step 2/5. Functionally, catalyzes the transfer of the phosphoribosyl group of 5-phosphorylribose-1-pyrophosphate (PRPP) to anthranilate to yield N-(5'-phosphoribosyl)-anthranilate (PRA). This is Anthranilate phosphoribosyltransferase from Geobacter sulfurreducens (strain ATCC 51573 / DSM 12127 / PCA).